A 434-amino-acid polypeptide reads, in one-letter code: Glucose-6-phosphate 1-dehydrogenase (434 aa).

NADP(+)-binding positions include 7-14, arginine 36, tyrosine 93, and lysine 112; that span reads GSSGDLAK. Residues lysine 112, 137-141, glutamate 175, and aspartate 193 each bind D-glucose 6-phosphate; that span reads HYLLK. Residue histidine 198 is the Proton acceptor of the active site. Lysine 280 and lysine 285 together coordinate D-glucose 6-phosphate. Arginine 286 provides a ligand contact to NADP(+).

Belongs to the glucose-6-phosphate dehydrogenase family.

It catalyses the reaction D-glucose 6-phosphate + NADP(+) = 6-phospho-D-glucono-1,5-lactone + NADPH + H(+). It functions in the pathway carbohydrate degradation; pentose phosphate pathway; D-ribulose 5-phosphate from D-glucose 6-phosphate (oxidative stage): step 1/3. In terms of biological role, catalyzes the rate-limiting step of the oxidative pentose-phosphate pathway, which represents a route for the dissimilation of carbohydrates besides glycolysis. The main function of this enzyme is to provide reducing power (NADPH) and pentose phosphates for fatty acid and nucleic acid synthesis. The sequence is that of Glucose-6-phosphate 1-dehydrogenase (ZWF1) from Encephalitozoon cuniculi (strain GB-M1) (Microsporidian parasite).